We begin with the raw amino-acid sequence, 142 residues long: Large ribosomal subunit protein uL11 (142 aa).

It belongs to the universal ribosomal protein uL11 family. Part of the ribosomal stalk of the 50S ribosomal subunit. Interacts with L10 and the large rRNA to form the base of the stalk. L10 forms an elongated spine to which L12 dimers bind in a sequential fashion forming a multimeric L10(L12)X complex. In terms of processing, one or more lysine residues are methylated.

Functionally, forms part of the ribosomal stalk which helps the ribosome interact with GTP-bound translation factors. The sequence is that of Large ribosomal subunit protein uL11 from Rhodopseudomonas palustris (strain BisA53).